Consider the following 510-residue polypeptide: GMP synthase [glutamine-hydrolyzing] (510 aa).

The Glutamine amidotransferase type-1 domain occupies 5–195 (LVIVVDFGGQ…LYEICKADGD (191 aa)). Cysteine 82 serves as the catalytic Nucleophile. Catalysis depends on residues histidine 169 and glutamate 171. In terms of domain architecture, GMPS ATP-PPase spans 196–385 (WTMENFLEEQ…LEMPEYLVYR (190 aa)). 223-229 (SGGVDSS) is an ATP binding site.

As to quaternary structure, homodimer.

It carries out the reaction XMP + L-glutamine + ATP + H2O = GMP + L-glutamate + AMP + diphosphate + 2 H(+). It participates in purine metabolism; GMP biosynthesis; GMP from XMP (L-Gln route): step 1/1. Its function is as follows. Catalyzes the synthesis of GMP from XMP. This chain is GMP synthase [glutamine-hydrolyzing], found in Finegoldia magna (strain ATCC 29328 / DSM 20472 / WAL 2508) (Peptostreptococcus magnus).